The following is a 102-amino-acid chain: Small ribosomal subunit protein uS10 (102 aa).

A disordered region spans residues 34 to 59 (QMSGPIPLPTKRLLVPTRKSPDGEGK).

The protein belongs to the universal ribosomal protein uS10 family. Part of the 30S ribosomal subunit.

In terms of biological role, involved in the binding of tRNA to the ribosomes. In Methanopyrus kandleri (strain AV19 / DSM 6324 / JCM 9639 / NBRC 100938), this protein is Small ribosomal subunit protein uS10.